Consider the following 179-residue polypeptide: Cell division protein SepF (179 aa).

The tract at residues 22–55 (LPYEKRDEPVFTSVNSSQEPALPMNQPSQSAGTK) is disordered. Residues 33–55 (TSVNSSQEPALPMNQPSQSAGTK) show a composition bias toward polar residues.

The protein belongs to the SepF family. Homodimer. Interacts with FtsZ.

Its subcellular location is the cytoplasm. Functionally, cell division protein that is part of the divisome complex and is recruited early to the Z-ring. Probably stimulates Z-ring formation, perhaps through the cross-linking of FtsZ protofilaments. Its function overlaps with FtsA. In Streptococcus pneumoniae (strain Taiwan19F-14), this protein is Cell division protein SepF.